We begin with the raw amino-acid sequence, 200 residues long: MTVVIGLTGGIASGKSTVSQMFRELSIPVIDADIIAREVVERGKPAYNKIVEVFGTEVLQEDGELDRPKLGSVVFYNEEKRLQLNKIVHPAVREEMNRQKEMYIKEGMQAVVLDIPLLFESKLTSLVDRILVVAVKPHTQLERLMKRNNFLEEEATARIQSQMPLEEKVKNADEVINNDGTIMGTKTQLQVILKKWNIID.

A DPCK domain is found at 4-200 (VIGLTGGIAS…VILKKWNIID (197 aa)). 12 to 17 (ASGKST) serves as a coordination point for ATP.

This sequence belongs to the CoaE family.

It localises to the cytoplasm. The enzyme catalyses 3'-dephospho-CoA + ATP = ADP + CoA + H(+). It functions in the pathway cofactor biosynthesis; coenzyme A biosynthesis; CoA from (R)-pantothenate: step 5/5. Functionally, catalyzes the phosphorylation of the 3'-hydroxyl group of dephosphocoenzyme A to form coenzyme A. The polypeptide is Dephospho-CoA kinase (Bacillus cereus (strain ATCC 14579 / DSM 31 / CCUG 7414 / JCM 2152 / NBRC 15305 / NCIMB 9373 / NCTC 2599 / NRRL B-3711)).